Consider the following 118-residue polypeptide: Holo-[acyl-carrier-protein] synthase (118 aa).

D8 and E58 together coordinate Mg(2+).

It belongs to the P-Pant transferase superfamily. AcpS family. It depends on Mg(2+) as a cofactor.

Its subcellular location is the cytoplasm. It catalyses the reaction apo-[ACP] + CoA = holo-[ACP] + adenosine 3',5'-bisphosphate + H(+). Transfers the 4'-phosphopantetheine moiety from coenzyme A to a Ser of acyl-carrier-protein. The protein is Holo-[acyl-carrier-protein] synthase of Listeria monocytogenes serotype 4b (strain CLIP80459).